A 126-amino-acid chain; its full sequence is Glycine cleavage system H protein (126 aa).

A Lipoyl-binding domain is found at 22 to 104 (TVTIGITEYA…YEKAWMVKVE (83 aa)). N6-lipoyllysine is present on Lys63.

This sequence belongs to the GcvH family. In terms of assembly, the glycine cleavage system is composed of four proteins: P, T, L and H. (R)-lipoate is required as a cofactor.

Its function is as follows. The glycine cleavage system catalyzes the degradation of glycine. The H protein shuttles the methylamine group of glycine from the P protein to the T protein. Is also involved in protein lipoylation via its role as an octanoyl/lipoyl carrier protein intermediate. In Staphylococcus haemolyticus (strain JCSC1435), this protein is Glycine cleavage system H protein.